Consider the following 125-residue polypeptide: Cu-Zn superoxide dismutase-like protein (125 aa).

A disulfide bridge links Cys-52 with Cys-102.

Belongs to the Cu-Zn superoxide dismutase family.

It localises to the host cytoplasm. Its function is as follows. Virion protein with no enzymatic activity. The protein is Cu-Zn superoxide dismutase-like protein of Camelpox virus (strain M-96).